Consider the following 103-residue polypeptide: Large ribosomal subunit protein bL21 (103 aa).

The protein belongs to the bacterial ribosomal protein bL21 family. In terms of assembly, part of the 50S ribosomal subunit. Contacts protein L20.

Functionally, this protein binds to 23S rRNA in the presence of protein L20. The chain is Large ribosomal subunit protein bL21 from Desulfotalea psychrophila (strain LSv54 / DSM 12343).